A 1341-amino-acid chain; its full sequence is Pleckstrin homology domain-containing family G member 3 (1341 aa).

The disordered stretch occupies residues Met1 to Trp68. Over residues Ser18 to Ser29 the composition is skewed to low complexity. 2 stretches are compositionally biased toward polar residues: residues Ser42–Gly51 and Pro59–Trp68. Ser76 carries the phosphoserine modification. Positions Tyr93 to Met272 constitute a DH domain. Residues Asp296–Leu394 enclose the PH domain. Phosphoserine occurs at positions 433 and 502. A disordered region spans residues Ser433–Arg482. Disordered stretches follow at residues Asp508–Glu657 and Pro684–Pro715. 2 stretches are compositionally biased toward acidic residues: residues Glu529–Glu541 and Gly570–Ser580. A phosphoserine mark is found at Ser571, Ser694, Ser695, Ser737, Ser759, Ser762, and Ser766. The span at Ser695–Gln707 shows a compositional bias: acidic residues. Residues Ser775–Thr832 are disordered. Residues Asn798 to Ala810 show a composition bias toward polar residues. Basic and acidic residues predominate over residues Glu817–Thr832. A phosphoserine mark is found at Ser862, Ser899, Ser900, and Ser947. Disordered regions lie at residues Ser876–Pro930, Glu939–Asn958, Lys1071–Lys1097, and His1117–Thr1162. The segment covering Glu939 to Pro948 has biased composition (basic and acidic residues). Residues Arg949–Asn958 are compositionally biased toward polar residues. A phosphoserine mark is found at Ser1129, Ser1134, Ser1136, Ser1141, Ser1155, Ser1158, and Ser1201. Residues Phe1135–Thr1162 are compositionally biased toward polar residues. Disordered regions lie at residues Glu1204–Gly1249 and Lys1271–Gly1341. A compositionally biased stretch (basic and acidic residues) spans Gln1309–Asp1320.

Its subcellular location is the cytoplasm. It localises to the cytoskeleton. Its function is as follows. Plays a role in controlling cell polarity and cell motility by selectively binding newly polymerized actin and activating RAC1 and CDC42 to enhance local actin polymerization. The protein is Pleckstrin homology domain-containing family G member 3 of Mus musculus (Mouse).